We begin with the raw amino-acid sequence, 122 residues long: MPRIIGIDIPAKKKLKISLTYIYGIGPALSKEIIARLQLNPEARAAELTEEEVGRLNALLQSDYVVEGDLRRRVQSDIKRLITIHAYRGQRHRLSLPVRGQRTKTNSRTRKGKRKTIAGKKK.

The segment at leucine 96–lysine 122 is disordered. The span at glutamine 101–lysine 122 shows a compositional bias: basic residues.

This sequence belongs to the universal ribosomal protein uS13 family. In terms of assembly, part of the 30S ribosomal subunit. Forms a loose heterodimer with protein S19. Forms two bridges to the 50S subunit in the 70S ribosome.

Functionally, located at the top of the head of the 30S subunit, it contacts several helices of the 16S rRNA. In the 70S ribosome it contacts the 23S rRNA (bridge B1a) and protein L5 of the 50S subunit (bridge B1b), connecting the 2 subunits; these bridges are implicated in subunit movement. Contacts the tRNAs in the A and P-sites. The sequence is that of Small ribosomal subunit protein uS13 from Chlamydia trachomatis serovar L2 (strain ATCC VR-902B / DSM 19102 / 434/Bu).